The chain runs to 266 residues: DNA primase (266 aa).

A disordered region spans residues 244 to 266; it reads VTTTTTPSPPKIGSMQTTTKSTT. The span at 257 to 266 shows a compositional bias: polar residues; it reads SMQTTTKSTT.

Belongs to the baculoviridae LEF-1 family. Interacts with LEF-2.

Plays an essential role in viral DNA replication. May generates single-stranded DNA for both leading and lagging strand synthesis. The primase initiates primer synthesis and thereby produces large amount of short RNA primers on the lagging strand that the polymerase elongates using dNTPs. The polypeptide is DNA primase (LEF-1) (Autographa californica nuclear polyhedrosis virus (AcMNPV)).